Reading from the N-terminus, the 330-residue chain is Ketol-acid reductoisomerase (NADP(+)) (330 aa).

The region spanning 2–182 (ARLYYDTDAN…GGTRAGILET (181 aa)) is the KARI N-terminal Rossmann domain. NADP(+) is bound by residues 25-28 (YGSQ), Ser-51, Ser-53, and 83-86 (DEVQ). His-108 is an active-site residue. Residue Gly-134 participates in NADP(+) binding. The KARI C-terminal knotted domain maps to 183 to 328 (TFREETETDL…RELRAMFSWL (146 aa)). Positions 191, 195, 227, and 231 each coordinate Mg(2+). Substrate is bound at residue Ser-252.

The protein belongs to the ketol-acid reductoisomerase family. Requires Mg(2+) as cofactor.

The enzyme catalyses (2R)-2,3-dihydroxy-3-methylbutanoate + NADP(+) = (2S)-2-acetolactate + NADPH + H(+). It catalyses the reaction (2R,3R)-2,3-dihydroxy-3-methylpentanoate + NADP(+) = (S)-2-ethyl-2-hydroxy-3-oxobutanoate + NADPH + H(+). The protein operates within amino-acid biosynthesis; L-isoleucine biosynthesis; L-isoleucine from 2-oxobutanoate: step 2/4. Its pathway is amino-acid biosynthesis; L-valine biosynthesis; L-valine from pyruvate: step 2/4. In terms of biological role, involved in the biosynthesis of branched-chain amino acids (BCAA). Catalyzes an alkyl-migration followed by a ketol-acid reduction of (S)-2-acetolactate (S2AL) to yield (R)-2,3-dihydroxy-isovalerate. In the isomerase reaction, S2AL is rearranged via a Mg-dependent methyl migration to produce 3-hydroxy-3-methyl-2-ketobutyrate (HMKB). In the reductase reaction, this 2-ketoacid undergoes a metal-dependent reduction by NADPH to yield (R)-2,3-dihydroxy-isovalerate. The chain is Ketol-acid reductoisomerase (NADP(+)) from Synechococcus sp. (strain JA-2-3B'a(2-13)) (Cyanobacteria bacterium Yellowstone B-Prime).